The primary structure comprises 2226 residues: Histone-lysine N-methyltransferase ash1 (2226 aa).

The tract at residues 1-145 (MSCSQNETAA…SDSEDDLPLK (145 aa)) is disordered. Residues 32–52 (ITDQSSQSKSIKSATQFSVQR) show a composition bias toward polar residues. Over residues 99-111 (AVSKKVKVKRKKL) the composition is skewed to basic residues. Phosphoserine occurs at positions 135, 136, and 138. Phosphothreonine is present on residues threonine 200 and threonine 201. Over residues 260-269 (PRKRRGRPKK) the composition is skewed to basic residues. Disordered regions lie at residues 260-324 (PRKR…IASS), 343-367 (RVLY…SSNK), 673-695 (AQQL…KRGL), 711-749 (SASA…HKLP), and 811-832 (KRHL…SNSP). The segment at residues 261 to 273 (RKRRGRPKKVVPT) is a DNA-binding region (a.T hook 1). A compositionally biased stretch (low complexity) spans 294–306 (STTSTTQSTTPSP). A compositionally biased stretch (polar residues) spans 307-324 (KMQNENAVPTGSLPIASS). Positions 711 to 727 (SASASGTPNGSGSSNGN) are enriched in low complexity. Serine 740, serine 831, and serine 977 each carry phosphoserine. The segment covering 820–831 (SVSGAGSSASNS) has biased composition (low complexity). 2 disordered regions span residues 980-1026 (QQTT…DCER) and 1049-1230 (SVVA…TTSL). The span at 989–999 (HEPEFDPDDEP) shows a compositional bias: acidic residues. 2 consecutive DNA-binding regions (a.T hook) follow at residues 1065 to 1077 (GRPR…NREQ) and 1095 to 1107 (AKKR…QPVL). The segment covering 1108 to 1117 (EEPPPTPPPQ) has biased composition (pro residues). Residues 1186–1200 (AEAKRLDSIPTEHDP) show a composition bias toward basic and acidic residues. A compositionally biased stretch (polar residues) spans 1205–1219 (ESHNPGPQDYASCSE). The AWS domain maps to 1339 to 1387 (FDHPTCNCKNQGEKSCLDNCLNRMVYTECSPSNCPAGEKCRNQKIQRHA). The SET domain occupies 1390-1506 (PGVERFMTAD…EGEELTYDYN (117 aa)). One can recognise a Post-SET domain in the interval 1514–1530 (EGQPCRCNTPQCRGVIG). Disordered regions lie at residues 1536–1575 (VKPL…GKDI) and 1616–1648 (RASD…SSPS). Positions 1556-1568 (GRQRKQKAKKHAQ) are enriched in basic residues. 2 stretches are compositionally biased toward low complexity: residues 1619–1628 (DAAATASSPA) and 1639–1648 (RRPSTPSSPS). The Bromo domain maps to 1681-1789 (KMAVVLRDIC…DSYEQQKIAS (109 aa)). Positions 1808-1839 (PKEVLSSEEEPGKIAVKKSPGAKERDSPIVPL) are disordered. A PHD-type zinc finger spans residues 1857 to 1903 (VIRCICGLYKDEGLMIQCSKCMVWQHTECTKADIDADNYQCERCEPR). Positions 1952-2072 (KVLPTKKHTY…KTARFFSKAK (121 aa)) constitute a BAH domain. Residues 2205 to 2226 (SGRGARQRKTQQSSSSSTANST) form a disordered region. A compositionally biased stretch (low complexity) spans 2214-2226 (TQQSSSSSTANST).

It belongs to the class V-like SAM-binding methyltransferase superfamily. Histone-lysine methyltransferase family. SET2 subfamily. Component of a large multiprotein complex distinct from complexes containing ash2 or brm. Interacts (via SET domain) with trx (via SET domain). Interacts with nej/cbp. As to expression, expressed throughout development but is present at higher levels during the embryonic and pupal stages than during the larval stages. During the larval stages it accumulates primarily in imaginal disks.

Its subcellular location is the nucleus. It localises to the chromosome. The catalysed reaction is L-lysyl(4)-[histone H3] + 3 S-adenosyl-L-methionine = N(6),N(6),N(6)-trimethyl-L-lysyl(4)-[histone H3] + 3 S-adenosyl-L-homocysteine + 3 H(+). In terms of biological role, trithorax group (TrxG) protein that has histone methyltransferase activity. Specifically trimethylates 'Lys-4' of histone H3 (H3K4me3), a specific tag for epigenetic transcriptional activation. TrxG proteins are generally required to maintain the transcriptionally active state of homeotic genes throughout development. Does not act as a coactivator required for transcriptional activation, but specifically prevents inappropriate Polycomb Group (PcG) silencing of homeotic genes in cells in which they must stay transcriptionally active. This chain is Histone-lysine N-methyltransferase ash1 (ash1), found in Drosophila melanogaster (Fruit fly).